The primary structure comprises 360 residues: UDP-N-acetylglucosamine--N-acetylmuramyl-(pentapeptide) pyrophosphoryl-undecaprenol N-acetylglucosamine transferase (360 aa).

UDP-N-acetyl-alpha-D-glucosamine is bound by residues 15–17 (TGG), Asn-128, Arg-164, Ser-192, Ile-247, and Gln-292.

It belongs to the glycosyltransferase 28 family. MurG subfamily.

It localises to the cell inner membrane. The enzyme catalyses di-trans,octa-cis-undecaprenyl diphospho-N-acetyl-alpha-D-muramoyl-L-alanyl-D-glutamyl-meso-2,6-diaminopimeloyl-D-alanyl-D-alanine + UDP-N-acetyl-alpha-D-glucosamine = di-trans,octa-cis-undecaprenyl diphospho-[N-acetyl-alpha-D-glucosaminyl-(1-&gt;4)]-N-acetyl-alpha-D-muramoyl-L-alanyl-D-glutamyl-meso-2,6-diaminopimeloyl-D-alanyl-D-alanine + UDP + H(+). Its pathway is cell wall biogenesis; peptidoglycan biosynthesis. Functionally, cell wall formation. Catalyzes the transfer of a GlcNAc subunit on undecaprenyl-pyrophosphoryl-MurNAc-pentapeptide (lipid intermediate I) to form undecaprenyl-pyrophosphoryl-MurNAc-(pentapeptide)GlcNAc (lipid intermediate II). This Blochmanniella floridana protein is UDP-N-acetylglucosamine--N-acetylmuramyl-(pentapeptide) pyrophosphoryl-undecaprenol N-acetylglucosamine transferase.